The primary structure comprises 315 residues: Ribosomal protein L11 methyltransferase (315 aa).

Residues Thr162, Gly183, Asp205, and Asn248 each coordinate S-adenosyl-L-methionine.

Belongs to the methyltransferase superfamily. PrmA family.

It is found in the cytoplasm. It catalyses the reaction L-lysyl-[protein] + 3 S-adenosyl-L-methionine = N(6),N(6),N(6)-trimethyl-L-lysyl-[protein] + 3 S-adenosyl-L-homocysteine + 3 H(+). Its function is as follows. Methylates ribosomal protein L11. This is Ribosomal protein L11 methyltransferase from Enterococcus faecalis (strain ATCC 700802 / V583).